The sequence spans 303 residues: D-alanine--D-alanine ligase (303 aa).

Positions 104–300 (KLLWNAVGLP…FERLVERVLE (197 aa)) constitute an ATP-grasp domain. Residue 132–187 (IAKLGLPLFVKPASEGSSVGVSKVKTAEQLLPAIEEALKYDSIVLVEENLAGAEYS) coordinates ATP. 3 residues coordinate Mg(2+): Asp-254, Glu-267, and Asn-269.

This sequence belongs to the D-alanine--D-alanine ligase family. Requires Mg(2+) as cofactor. Mn(2+) serves as cofactor.

It localises to the cytoplasm. The catalysed reaction is 2 D-alanine + ATP = D-alanyl-D-alanine + ADP + phosphate + H(+). It participates in cell wall biogenesis; peptidoglycan biosynthesis. Cell wall formation. The sequence is that of D-alanine--D-alanine ligase from Glaesserella parasuis serovar 5 (strain SH0165) (Haemophilus parasuis).